Consider the following 344-residue polypeptide: Heat-inducible transcription repressor HrcA (344 aa).

Belongs to the HrcA family.

In terms of biological role, negative regulator of class I heat shock genes (grpE-dnaK-dnaJ and groELS operons). Prevents heat-shock induction of these operons. This chain is Heat-inducible transcription repressor HrcA, found in Streptococcus mutans serotype c (strain ATCC 700610 / UA159).